The following is a 268-amino-acid chain: Imidazole glycerol phosphate synthase subunit HisF (268 aa).

Residues D12 and D131 contribute to the active site.

The protein belongs to the HisA/HisF family. In terms of assembly, heterodimer of HisH and HisF.

It is found in the cytoplasm. It catalyses the reaction 5-[(5-phospho-1-deoxy-D-ribulos-1-ylimino)methylamino]-1-(5-phospho-beta-D-ribosyl)imidazole-4-carboxamide + L-glutamine = D-erythro-1-(imidazol-4-yl)glycerol 3-phosphate + 5-amino-1-(5-phospho-beta-D-ribosyl)imidazole-4-carboxamide + L-glutamate + H(+). It participates in amino-acid biosynthesis; L-histidine biosynthesis; L-histidine from 5-phospho-alpha-D-ribose 1-diphosphate: step 5/9. In terms of biological role, IGPS catalyzes the conversion of PRFAR and glutamine to IGP, AICAR and glutamate. The HisF subunit catalyzes the cyclization activity that produces IGP and AICAR from PRFAR using the ammonia provided by the HisH subunit. The polypeptide is Imidazole glycerol phosphate synthase subunit HisF (Salinibacter ruber (strain DSM 13855 / M31)).